Consider the following 304-residue polypeptide: MATASPHEIAHKLGSGLLSFPVTHFKDDHSFDEAAYRENIGWLGQFDASGLFAAGGTGEFFSLTPPEVEQVVRAAVQEAPDGLPVIAPAGYGTSTAVQMARSAESVGAHGILLLPPYLTEASQDGLVAHVKEVCAATTLGVTIYSRANAVYTEAAVAELADSCPNLVGFKDGVGNIEQMTRIYASLGDRLTYIGGLPTAEMFALPYLALGVTTYSSAIYNFVPKFAIDFYNALRSGDNAFVINALNEFVIPYCNLRNKKQGYAVSIIKAGMTVIDRPAGPVRAPLTDLDAVELAELADLIKKVS.

It belongs to the DapA family.

It carries out the reaction 5-dehydro-4-deoxy-D-glucarate + H(+) = 2,5-dioxopentanoate + CO2 + H2O. It participates in carbohydrate acid metabolism; D-glucarate degradation; 2,5-dioxopentanoate from D-glucarate: step 2/2. The sequence is that of Probable 5-dehydro-4-deoxyglucarate dehydratase from Rhodococcus jostii (strain RHA1).